Consider the following 313-residue polypeptide: Glyoxylate/hydroxypyruvate reductase A HPR2 (313 aa).

Residues 152–155 (LGRI), 174–176 (SRT), 230–232 (IGR), and D256 contribute to the NADP(+) site. The active site involves R232. Residue E261 is part of the active site. The Proton donor role is filled by H279. Residue 279–281 (HVG) participates in NADP(+) binding.

Belongs to the D-isomer specific 2-hydroxyacid dehydrogenase family. GyaR subfamily. Homodimer.

It localises to the cytoplasm. The catalysed reaction is glycolate + NADP(+) = glyoxylate + NADPH + H(+). It carries out the reaction (R)-glycerate + NAD(+) = 3-hydroxypyruvate + NADH + H(+). It catalyses the reaction (R)-glycerate + NADP(+) = 3-hydroxypyruvate + NADPH + H(+). Its activity is regulated as follows. Strongly inhibited by oxalate. Its function is as follows. Catalyzes the NADPH-dependent reduction of glyoxylate and hydroxypyruvate (HP) into glycolate and glycerate in the cytoplasm, thus providing a cytosolic bypass to the photorespiratory core cycle. Mostly active in the presence of NADPH and hydroxypyruvate. This is Glyoxylate/hydroxypyruvate reductase A HPR2 (HPR2) from Arabidopsis thaliana (Mouse-ear cress).